A 94-amino-acid chain; its full sequence is Acylphosphatase (94 aa).

Positions 8-94 (ALHVIVKGRV…RGYTDFRIEV (87 aa)) constitute an Acylphosphatase-like domain. Residues Arg-23 and Asn-41 contribute to the active site.

It belongs to the acylphosphatase family.

The enzyme catalyses an acyl phosphate + H2O = a carboxylate + phosphate + H(+). The sequence is that of Acylphosphatase (acyP) from Treponema denticola (strain ATCC 35405 / DSM 14222 / CIP 103919 / JCM 8153 / KCTC 15104).